We begin with the raw amino-acid sequence, 2571 residues long: Stabilin-1 (2571 aa).

An N-terminal signal peptide occupies residues 1–25 (MAEPRTLLLLCVLVLCLSDSSFIRG). At 26-2475 (QTVRSKRCDI…RAVLGSEPPP (2450 aa)) the chain is on the extracellular side. EGF-like domains lie at 111 to 149 (FECP…SVCQ), 157 to 194 (FGPD…PHCD), 196 to 232 (ELPV…NVCL), and 233 to 272 (APDP…KVCL). 12 cysteine pairs are disulfide-bonded: Cys-113–Cys-127, Cys-121–Cys-137, Cys-139–Cys-148, Cys-161–Cys-172, Cys-165–Cys-182, Cys-184–Cys-193, Cys-200–Cys-211, Cys-205–Cys-218, Cys-220–Cys-231, Cys-237–Cys-248, Cys-242–Cys-258, and Cys-260–Cys-271. 2 N-linked (GlcNAc...) asparagine glycosylation sites follow: Asn-134 and Asn-142. 7 N-linked (GlcNAc...) asparagine glycosylation sites follow: Asn-287, Asn-313, Asn-416, Asn-607, Asn-674, Asn-713, and Asn-746. FAS1 domains are found at residues 357–495 (YGHL…TALR) and 507–642 (KKTV…EGIL). Residues 729-769 (DCTQCPGGFSNPCYGKGNCSDGVRGNGACLCFPDYKGIACH) form the EGF-like 5 domain. 3 disulfides stabilise this stretch: Cys-733–Cys-747, Cys-741–Cys-757, and Cys-759–Cys-768. Residue Asn-817 is glycosylated (N-linked (GlcNAc...) asparagine). 4 EGF-like domains span residues 819–859 (SMGN…NGFS), 862–904 (RSNP…RICV), 905–947 (AIDE…YECS), and 948–987 (PIDP…DGFS). Cystine bridges form between Cys-823/Cys-838, Cys-832/Cys-847, Cys-866/Cys-880, Cys-874/Cys-890, Cys-892/Cys-903, Cys-909/Cys-923, Cys-917/Cys-933, Cys-935/Cys-946, Cys-952/Cys-965, and Cys-959/Cys-975. FAS1 domains lie at 989–1119 (YGDI…SQVL) and 1129–1254 (GPGL…SGIL). Residues Asn-1011, Asn-1088, Asn-1097, Asn-1171, Asn-1179, Asn-1223, and Asn-1275 are each glycosylated (N-linked (GlcNAc...) asparagine). A Laminin EGF-like 1 domain is found at 1328–1393 (TLCEPCPGGL…CDCDHGLCQE (66 aa)). Cystine bridges form between Cys-1333–Cys-1347, Cys-1341–Cys-1357, Cys-1359–Cys-1368, Cys-1380–Cys-1391, Cys-1384–Cys-1401, Cys-1403–Cys-1412, Cys-1421–Cys-1431, Cys-1425–Cys-1441, Cys-1443–Cys-1454, Cys-1460–Cys-1473, Cys-1467–Cys-1483, Cys-1485–Cys-1496, Cys-1502–Cys-1515, Cys-1509–Cys-1525, Cys-1527–Cys-1539, Cys-1545–Cys-1558, Cys-1552–Cys-1568, and Cys-1570–Cys-1582. An N-linked (GlcNAc...) asparagine glycan is attached at Asn-1398. EGF-like domains follow at residues 1417–1455 (TDHQ…SYCS), 1456–1497 (EVDP…ELCQ), 1498–1540 (EINS…QTCK), and 1541–1583 (LLDP…ITCH). N-linked (GlcNAc...) asparagine glycosylation is found at Asn-1450 and Asn-1472. 2 FAS1 domains span residues 1583–1709 (HGRV…DHVL) and 1725–1865 (PQRN…DQLL). Residues Asn-1627 and Asn-1728 are each glycosylated (N-linked (GlcNAc...) asparagine). A Laminin EGF-like 2 domain is found at 1966 to 2031 (INCHACPGGP…RCTQHGRCDE (66 aa)). 17 disulfides stabilise this stretch: Cys-1971–Cys-1985, Cys-1979–Cys-1995, Cys-1997–Cys-2006, Cys-2018–Cys-2029, Cys-2023–Cys-2039, Cys-2041–Cys-2050, Cys-2060–Cys-2070, Cys-2064–Cys-2076, Cys-2078–Cys-2089, Cys-2095–Cys-2108, Cys-2102–Cys-2117, Cys-2119–Cys-2130, Cys-2136–Cys-2150, Cys-2144–Cys-2160, Cys-2162–Cys-2173, Cys-2230–Cys-2299, and Cys-2254–Cys-2275. EGF-like domains are found at residues 2056-2090 (LQPV…RVCT), 2091-2131 (VADL…WSCR), and 2132-2174 (ARDP…LQCL). Asn-2107 is a glycosylation site (N-linked (GlcNAc...) asparagine). Positions 2208-2301 (GVFHIQATSG…SELWDAYCYR (94 aa)) constitute a Link domain. 8 N-linked (GlcNAc...) asparagine glycosylation sites follow: Asn-2261, Asn-2290, Asn-2334, Asn-2347, Asn-2379, Asn-2393, Asn-2400, and Asn-2424. The FAS1 7 domain occupies 2322 to 2459 (NGKLLDVLAA…GIIHALASPL (138 aa)). The chain crosses the membrane as a helical span at residues 2476–2496 (VALSLGVVVTSGTLLGLVAGA). Residues 2497 to 2571 (LYLRARGKPP…PDTQRVLKVK (75 aa)) lie on the Cytoplasmic side of the membrane.

Interacts with CHID1.

It localises to the membrane. Its function is as follows. Acts as a scavenger receptor for acetylated low density lipoprotein. Binds to both Gram-positive and Gram-negative bacteria and may play a role in defense against bacterial infection. When inhibited in endothelial tube formation assays, there is a marked decrease in cell-cell interactions, suggesting a role in angiogenesis. Involved in the delivery of newly synthesized CHID1/SI-CLP from the biosynthetic compartment to the endosomal/lysosomal system. The chain is Stabilin-1 (Stab1) from Mus musculus (Mouse).